We begin with the raw amino-acid sequence, 331 residues long: Protein C10 (331 aa).

It belongs to the poxviridae C4/C10 protein family.

This is Protein C10 from Vaccinia virus (strain Copenhagen) (VACV).